The primary structure comprises 885 residues: Alanine--tRNA ligase (885 aa).

The Zn(2+) site is built by H564, H568, C676, and H680.

Belongs to the class-II aminoacyl-tRNA synthetase family. Zn(2+) is required as a cofactor.

It is found in the cytoplasm. The catalysed reaction is tRNA(Ala) + L-alanine + ATP = L-alanyl-tRNA(Ala) + AMP + diphosphate. Catalyzes the attachment of alanine to tRNA(Ala) in a two-step reaction: alanine is first activated by ATP to form Ala-AMP and then transferred to the acceptor end of tRNA(Ala). Also edits incorrectly charged Ser-tRNA(Ala) and Gly-tRNA(Ala) via its editing domain. The sequence is that of Alanine--tRNA ligase from Brucella abortus (strain 2308).